The sequence spans 424 residues: Inhibin beta A chain (424 aa).

The signal sequence occupies residues 1–20; sequence MPLLWLRGFLLASCWIIVRS. Residues 21–308 constitute a propeptide that is removed on maturation; that stretch reads SPTPGSGGHS…EEHPHRRRRR (288 aa). Residue Asn165 is glycosylated (N-linked (GlcNAc...) asparagine). 2 disordered regions span residues 178–197 and 259–306; these read QQRR…DVGF and KKKK…HRRR. Over residues 188-197 the composition is skewed to acidic residues; it reads AGEEAEDVGF. The span at 263-275 shows a compositional bias: basic and acidic residues; sequence KEEEAEGRKRDGE. Disulfide bonds link Cys312–Cys320, Cys319–Cys389, Cys348–Cys421, and Cys352–Cys423.

Belongs to the TGF-beta family. As to quaternary structure, dimeric, linked by one or more disulfide bonds. Inhibin A is a dimer of alpha/INHA and beta-A/INHBA. Activin A is a homodimer of beta-A/INHBA. Activin AB is a dimer of beta-A/INHBA and beta-B/INHBB. Interacts with FST and FSTL3; these interactions prevent activin A interaction to its type II receptor. Activin A interacts with ACVR2A. Activin A interacts with BMPR2. Inhibin A interacts with ACVR1; this interaction creates a non-signaling complex (NSC) that inhibits ACVR1-mediated BMP signaling. Inhibin A interacts with ACVR2A.

It localises to the secreted. In terms of biological role, inhibins/activins are involved in regulating a number of diverse functions such as hypothalamic and pituitary hormone secretion, gonadal hormone secretion, germ cell development and maturation, erythroid differentiation, insulin secretion, nerve cell survival, embryonic axial development or bone growth, depending on their subunit composition. Its function is as follows. Activin A is a homodimer of INHBA that plays a role in several essential biological processes including embryonic development, stem cell maintenance and differentiation, haematopoiesis, cell proliferation and tissue fibrosis. Signals through type I (such as ACVR1B or ACVR1C) and type II receptors (such as ACVR2A, ACVR2B or BMPR2) which, upon ligand binding, phosphorylate SMAD2 and SMAD3 intracellular signaling mediators that form a complex with SMAD4, translocate to the nucleus and modulate gene expression. Can also activate alternative non-canonical intracellular signaling pathways including the p38 MAPK, extracellular signal-regulated kinases 1/2 (ERK1/2) and c-Jun N-terminal kinases (JNKs) to modulate cell migration and differentiation. Alternatively, promotes osteoblastic differentiation via ACVRL1-SMAD1/5/9 pathway. In addition, can engage the type I receptor ACVR1 to form an ACVR1-activin A-type II receptor non-signaling complex (NSC) that renders receptors unavailable for engagement with BMPs, hence resulting in an apparent inhibition of ACVR1-mediated BMP signaling. Inhibin A is a dimer of alpha/INHA and beta-A/INHBA that functions as a feedback regulator in the hypothalamic-pituitary-gonadal (HPG) axis. Inhibits the secretion of FSH from the anterior pituitary gland by acting on pituitary gonadotrope cells. Antagonizes activin A by binding to the proteoglycan, betaglycan, and forming a stable complex with and, thereby, sequestering type II activin receptors while excluding type I receptor. This Sus scrofa (Pig) protein is Inhibin beta A chain (INHBA).